The primary structure comprises 282 residues: MTSTQNHPLQTQDDQQRFGQSPESVRETDHYQQEYIEDFTDRWDRLIDWNARAEAEGDFFIRLLKEHGARSVLDVATGTGFHSIRLLEEGFDVVSADGSPNMLARAFRNARNRDQLLRTSQADWRFLNRDIHGEFDAVICLGNSFTHLFKERDRRKALAEYYAVLKHNGILILDHRNYDRLLEGGSAVRQGKGNVYCGKDVEVGPEHVDEGLARFRYSFSDGGVYHLNMFPLRYGYVRRLMSEVGFQQITSFGDYQRDFENPDFYVHVAEKEYRFDVDTTMH.

Positions 1-23 are enriched in polar residues; it reads MTSTQNHPLQTQDDQQRFGQSPE. Residues 1–27 are disordered; the sequence is MTSTQNHPLQTQDDQQRFGQSPESVRE. S-adenosyl-L-methionine-binding positions include Tyr35, Trp43, Arg52, Ala76, Asp97, 123–124, and Leu141; that span reads DW. Substrate-binding residues include Asn143, Arg176, and Tyr217.

Belongs to the class I-like SAM-binding methyltransferase superfamily. Glycine N-methyltransferase family. As to quaternary structure, monomer.

It carries out the reaction glycine + 2 S-adenosyl-L-methionine = N,N-dimethylglycine + 2 S-adenosyl-L-homocysteine + 2 H(+). The catalysed reaction is glycine + S-adenosyl-L-methionine = sarcosine + S-adenosyl-L-homocysteine + H(+). The enzyme catalyses sarcosine + S-adenosyl-L-methionine = N,N-dimethylglycine + S-adenosyl-L-homocysteine + H(+). Its pathway is amine and polyamine biosynthesis; betaine biosynthesis via glycine pathway; betaine from glycine: step 1/3. It participates in amine and polyamine biosynthesis; betaine biosynthesis via glycine pathway; betaine from glycine: step 2/3. Catalyzes the methylation of glycine and sarcosine to sarcosine and dimethylglycine, respectively, with S-adenosylmethionine (AdoMet) acting as the methyl donor. It has strict specificity for glycine and sarcosine as the methyl group acceptors. This chain is Glycine/sarcosine N-methyltransferase, found in Parasynechococcus marenigrum (strain WH8102).